The primary structure comprises 303 residues: Probable cell division protein WhiA (303 aa).

A DNA-binding region (H-T-H motif) is located at residues 272 to 303 (SIQQVADALEFPITKSGVNHRLRKINKIADDL).

The protein belongs to the WhiA family.

In terms of biological role, involved in cell division and chromosome segregation. The chain is Probable cell division protein WhiA from Streptococcus pyogenes serotype M6 (strain ATCC BAA-946 / MGAS10394).